Here is a 662-residue protein sequence, read N- to C-terminus: UvrABC system protein B (662 aa).

The region spanning Lys-25 to Arg-182 is the Helicase ATP-binding domain. Residue Gly-38–Thr-45 coordinates ATP. The Beta-hairpin signature appears at Tyr-91–Ile-114. The 167-residue stretch at Gln-429–Ile-595 folds into the Helicase C-terminal domain. The region spanning Asp-622–Asp-657 is the UVR domain.

Belongs to the UvrB family. As to quaternary structure, forms a heterotetramer with UvrA during the search for lesions. Interacts with UvrC in an incision complex.

The protein localises to the cytoplasm. Functionally, the UvrABC repair system catalyzes the recognition and processing of DNA lesions. A damage recognition complex composed of 2 UvrA and 2 UvrB subunits scans DNA for abnormalities. Upon binding of the UvrA(2)B(2) complex to a putative damaged site, the DNA wraps around one UvrB monomer. DNA wrap is dependent on ATP binding by UvrB and probably causes local melting of the DNA helix, facilitating insertion of UvrB beta-hairpin between the DNA strands. Then UvrB probes one DNA strand for the presence of a lesion. If a lesion is found the UvrA subunits dissociate and the UvrB-DNA preincision complex is formed. This complex is subsequently bound by UvrC and the second UvrB is released. If no lesion is found, the DNA wraps around the other UvrB subunit that will check the other stand for damage. This is UvrABC system protein B from Clostridium botulinum (strain Kyoto / Type A2).